Reading from the N-terminus, the 305-residue chain is Acetaldehyde dehydrogenase (305 aa).

13–16 serves as a coordination point for NAD(+); sequence SGNI. Catalysis depends on C128, which acts as the Acyl-thioester intermediate. NAD(+) is bound by residues 159–167 and N278; that span reads SAGPGTRQN.

It belongs to the acetaldehyde dehydrogenase family.

The catalysed reaction is acetaldehyde + NAD(+) + CoA = acetyl-CoA + NADH + H(+). The chain is Acetaldehyde dehydrogenase from Chloroflexus aurantiacus (strain ATCC 29366 / DSM 635 / J-10-fl).